Reading from the N-terminus, the 325-residue chain is MSWLTPEVIDVIIAVVKALVILFVVVGCGAFMSFGERRLLGLFQNRYGPNRVGWGGSLQLVADMIKMFFKEDWIPPFTDRVIFTLAPMIAFTSLLLAMAIVPVTSTWMGADLNIGLLFFLMMAGLAVYAVLFAGWSSNNKYSLLGAMRASAQTLSYEVFLGLSLMGVVAQAGSFNMVDIVNSQAHLWNVIPQFLGFLTFCIAGVAVCHRHPFDQPEAEQELADGYHIEYAGMKFGLFFVGEYVGIVTVSALIVTLFFGGWQGPWLPPVIWFALKTAFFMMMFILIRAALPRPRYDQVMSFGWKVCLPLTLLNLLATAAVILYTAQ.

Helical transmembrane passes span 11 to 31 (VIIAVVKALVILFVVVGCGAF), 81 to 101 (VIFTLAPMIAFTSLLLAMAIV), 114 to 134 (IGLLFFLMMAGLAVYAVLFAG), 154 to 174 (LSYEVFLGLSLMGVVAQAGSF), 186 to 206 (LWNVIPQFLGFLTFCIAGVAV), 237 to 257 (FFVGEYVGIVTVSALIVTLFF), 265 to 285 (LPPVIWFALKTAFFMMMFILI), and 304 to 324 (VCLPLTLLNLLATAAVILYTA).

This sequence belongs to the complex I subunit 1 family. As to quaternary structure, NDH-1 is composed of 13 different subunits. Subunits NuoA, H, J, K, L, M, N constitute the membrane sector of the complex.

The protein resides in the cell inner membrane. The catalysed reaction is a quinone + NADH + 5 H(+)(in) = a quinol + NAD(+) + 4 H(+)(out). NDH-1 shuttles electrons from NADH, via FMN and iron-sulfur (Fe-S) centers, to quinones in the respiratory chain. The immediate electron acceptor for the enzyme in this species is believed to be ubiquinone. Couples the redox reaction to proton translocation (for every two electrons transferred, four hydrogen ions are translocated across the cytoplasmic membrane), and thus conserves the redox energy in a proton gradient. This subunit may bind ubiquinone. The protein is NADH-quinone oxidoreductase subunit H of Erwinia tasmaniensis (strain DSM 17950 / CFBP 7177 / CIP 109463 / NCPPB 4357 / Et1/99).